The sequence spans 319 residues: Protein sprouty homolog 1 (319 aa).

Residue M1 is modified to N-acetylmethionine. Residues 54–160 (TEGPSVVKRP…ERAIRTQPKQ (107 aa)) form a disordered region. A compositionally biased stretch (basic and acidic residues) spans 69–79 (PRQEKHERTHE). Over residues 112-131 (SRSTSTGSAASSGSNSSASS) the composition is skewed to low complexity. Residues 183 to 295 (QCGKCKCGEC…CYDWIHRPGC (113 aa)) form the SPR domain.

This sequence belongs to the sprouty family. Forms heterodimers with SPRY2. Interacts with TESK1. Interacts with CAV1 (via C-terminus).

It is found in the cytoplasm. Its subcellular location is the membrane. Functionally, inhibits fibroblast growth factor (FGF)-induced retinal lens fiber differentiation, probably by inhibiting FGF-mediated phosphorylation of ERK1/2. Inhibits TGFB-induced epithelial-to-mesenchymal transition in lens epithelial cells. The protein is Protein sprouty homolog 1 (SPRY1) of Cervus elaphus (Red deer).